Consider the following 479-residue polypeptide: Anaerobic nitric oxide reductase flavorubredoxin (479 aa).

The zinc metallo-hydrolase stretch occupies residues 30–210 (LRGSSYNSYL…PFSRLVTPKI (181 aa)). Fe cation is bound by residues His-79, Glu-81, Asp-83, His-147, Asp-166, and His-227. Residues 254-393 (ITIFYDTMSN…LCRQHGRDIA (140 aa)) enclose the Flavodoxin-like domain. FMN is bound by residues 260–264 (TMSNN) and 342–369 (AFGSHGWSGGAVDRLSTRLQDAGFEMSL). The 52-residue stretch at 423-474 (GPKMQCSVCQWIYDPALGEPLQDVAPGTPWSDVPDNFLCPECSLGKDVFDVL) folds into the Rubredoxin-like domain. Fe cation-binding residues include Cys-428, Cys-431, Cys-461, and Cys-464.

This sequence in the N-terminal section; belongs to the zinc metallo-hydrolase group 3 family. As to quaternary structure, homotetramer. Fe cation serves as cofactor. It depends on FMN as a cofactor.

It localises to the cytoplasm. The protein operates within nitrogen metabolism; nitric oxide reduction. Its function is as follows. Anaerobic nitric oxide reductase; uses NADH to detoxify nitric oxide (NO), protecting several 4Fe-4S NO-sensitive enzymes. Has at least 2 reductase partners, only one of which (NorW, flavorubredoxin reductase) has been identified. NO probably binds to the di-iron center; electrons enter from the NorW at rubredoxin and are transferred sequentially to the FMN center and the di-iron center. Also able to function as an aerobic oxygen reductase. This chain is Anaerobic nitric oxide reductase flavorubredoxin, found in Salmonella arizonae (strain ATCC BAA-731 / CDC346-86 / RSK2980).